Consider the following 194-residue polypeptide: Peptidyl-tRNA hydrolase (194 aa).

Residue Tyr17 coordinates tRNA. His22 acts as the Proton acceptor in catalysis. Tyr68, Asn70, and Asn116 together coordinate tRNA.

This sequence belongs to the PTH family. As to quaternary structure, monomer.

It localises to the cytoplasm. It carries out the reaction an N-acyl-L-alpha-aminoacyl-tRNA + H2O = an N-acyl-L-amino acid + a tRNA + H(+). In terms of biological role, hydrolyzes ribosome-free peptidyl-tRNAs (with 1 or more amino acids incorporated), which drop off the ribosome during protein synthesis, or as a result of ribosome stalling. Catalyzes the release of premature peptidyl moieties from peptidyl-tRNA molecules trapped in stalled 50S ribosomal subunits, and thus maintains levels of free tRNAs and 50S ribosomes. The sequence is that of Peptidyl-tRNA hydrolase from Pseudomonas entomophila (strain L48).